Consider the following 541-residue polypeptide: Putative acyl-CoA dehydrogenase AidB (541 aa).

Residues methionine 182–serine 191, threonine 185, serine 191, phenylalanine 216–serine 218, serine 218, isoleucine 423–leucine 433, and asparagine 429 contribute to the FAD site. Residues valine 445–valine 541 are dsDNA-binding.

This sequence belongs to the acyl-CoA dehydrogenase family. Homotetramer. Dimer of dimers. FAD is required as a cofactor.

It is found in the cytoplasm. Functionally, part of the adaptive DNA-repair response to alkylating agents. Could prevent alkylation damage by protecting DNA and destroying alkylating agents that have yet to reach their DNA target. Binds to double-stranded DNA with a preference for a DNA region that includes its own promoter. Shows weak isovaleryl-CoA dehydrogenase activity in vitro. The sequence is that of Putative acyl-CoA dehydrogenase AidB (aidB) from Escherichia coli (strain K12).